The chain runs to 158 residues: NAD(P)H-quinone oxidoreductase subunit J, chloroplastic (158 aa).

The protein belongs to the complex I 30 kDa subunit family. As to quaternary structure, NDH is composed of at least 16 different subunits, 5 of which are encoded in the nucleus.

It localises to the plastid. The protein resides in the chloroplast thylakoid membrane. It catalyses the reaction a plastoquinone + NADH + (n+1) H(+)(in) = a plastoquinol + NAD(+) + n H(+)(out). The enzyme catalyses a plastoquinone + NADPH + (n+1) H(+)(in) = a plastoquinol + NADP(+) + n H(+)(out). Its function is as follows. NDH shuttles electrons from NAD(P)H:plastoquinone, via FMN and iron-sulfur (Fe-S) centers, to quinones in the photosynthetic chain and possibly in a chloroplast respiratory chain. The immediate electron acceptor for the enzyme in this species is believed to be plastoquinone. Couples the redox reaction to proton translocation, and thus conserves the redox energy in a proton gradient. The protein is NAD(P)H-quinone oxidoreductase subunit J, chloroplastic of Gossypium barbadense (Sea Island cotton).